Here is a 362-residue protein sequence, read N- to C-terminus: Probable choline-phosphate cytidylyltransferase (362 aa).

The segment covering 1–37 has biased composition (basic and acidic residues); the sequence is MGEEGIKINDTHKRRIDEVEPSEKEDNVERQTKKYNF. The interval 1–79 is disordered; the sequence is MGEEGIKIND…VSPVEEEPRD (79 aa). Residues 109–117 and Lys147 contribute to the CTP site; that span reads VFDLFHIGH. Residues Lys147 and Trp176 each contribute to the substrate site. Residues 193-194, Tyr198, and 221-225 contribute to the CTP site; these read HD and RTEGV. A disordered region spans residues 308–362; sequence KNPLHGSSEPSSPGPTGFLGGINRWMQRRSSSHYDLPRVGNEIAASSSSATEENH. Composition is skewed to low complexity over residues 313–323 and 351–362; these read GSSEPSSPGPT and AASSSSATEENH. 2 positions are modified to phosphoserine: Ser315 and Ser319. Thr323 is subject to Phosphothreonine. At Ser355 the chain carries Phosphoserine.

This sequence belongs to the cytidylyltransferase family.

The protein localises to the nucleus. It catalyses the reaction phosphocholine + CTP + H(+) = CDP-choline + diphosphate. This is Probable choline-phosphate cytidylyltransferase from Schizosaccharomyces pombe (strain 972 / ATCC 24843) (Fission yeast).